The chain runs to 343 residues: Protein RecA (343 aa).

64–71 (GPESSGKT) contacts ATP.

It belongs to the RecA family.

It is found in the cytoplasm. Functionally, can catalyze the hydrolysis of ATP in the presence of single-stranded DNA, the ATP-dependent uptake of single-stranded DNA by duplex DNA, and the ATP-dependent hybridization of homologous single-stranded DNAs. It interacts with LexA causing its activation and leading to its autocatalytic cleavage. The protein is Protein RecA of Bacillus cereus (strain ATCC 10987 / NRS 248).